A 77-amino-acid polypeptide reads, in one-letter code: NADH dehydrogenase [ubiquinone] 1 alpha subcomplex subunit 3 (77 aa).

Residues 23-45 (IVGGSALALAGIVMATIGVANYY) form a helical membrane-spanning segment.

The protein belongs to the complex I NDUFA3 subunit family. In terms of assembly, complex I is composed of 43 different subunits.

The protein resides in the mitochondrion inner membrane. It is found in the cytoplasm. It localises to the myofibril. The protein localises to the sarcomere. Its subcellular location is the z line. Functionally, accessory subunit of the mitochondrial membrane respiratory chain NADH dehydrogenase (Complex I), that is believed not to be involved in catalysis. Complex I functions in the transfer of electrons from NADH to the respiratory chain. The immediate electron acceptor for the enzyme is believed to be ubiquinone. Required for the maintenance of muscle integrity and for cell proliferation in the wing imaginal disc epithelium, possibly by interacting with the chaperone-assisted selective autophagy (CASA) pathway. In Drosophila melanogaster (Fruit fly), this protein is NADH dehydrogenase [ubiquinone] 1 alpha subcomplex subunit 3.